The following is a 177-amino-acid chain: Voltage-dependent L-type calcium channel subunit alpha-1C (177 aa).

Residues Ile-27–Gly-45 traverse the membrane as a helical segment. Residues Tyr-64 to Phe-84 form a helical membrane-spanning segment. N-linked (GlcNAc...) asparagine glycosylation occurs at Asn-90. The pore-forming intramembrane region spans Ala-107–Leu-125. The Selectivity filter of repeat IV signature appears at Thr-116–Ala-119. A disulfide bridge connects residues Cys-133 and Cys-149. N-linked (GlcNAc...) asparagine glycosylation is present at Asn-141. The chain crosses the membrane as a helical span at residues Ala-154–Ile-177.

This sequence belongs to the calcium channel alpha-1 subunit (TC 1.A.1.11) family. CACNA1C subfamily. In terms of assembly, component of a calcium channel complex consisting of a pore-forming alpha subunit (CACNA1C) and ancillary beta, gamma and delta subunits. The channel complex contains alpha, beta, gamma and delta subunits in a 1:1:1:1 ratio, i.e. it contains only one of each type of subunit. CACNA1C channel activity is modulated by ancillary subunits, such as CACNB2, CACNB3, CACNA2D1 and CACNA2D4. In terms of processing, phosphorylation by PKA activates the channel.

Its subcellular location is the cell membrane. It is found in the perikaryon. The protein resides in the postsynaptic density membrane. It localises to the cell projection. The protein localises to the dendrite. Its subcellular location is the sarcolemma. It is found in the T-tubule. It carries out the reaction Ca(2+)(in) = Ca(2+)(out). With respect to regulation, inhibited by dihydropyridines (DHP), such as isradipine. Channel activity is regulated by Ca(2+) and calmodulin. Its function is as follows. Pore-forming, alpha-1C subunit of the voltage-gated calcium channel that gives rise to L-type calcium currents. Mediates influx of calcium ions into the cytoplasm, and thereby triggers calcium release from the sarcoplasm. Plays an important role in excitation-contraction coupling in the heart. Required for normal heart development and normal regulation of heart rhythm. Required for normal contraction of smooth muscle cells in blood vessels and in the intestine. Essential for normal blood pressure regulation via its role in the contraction of arterial smooth muscle cells. Long-lasting (L-type) calcium channels belong to the 'high-voltage activated' (HVA) group. The polypeptide is Voltage-dependent L-type calcium channel subunit alpha-1C (CACNA1C) (Gallus gallus (Chicken)).